The following is a 142-amino-acid chain: Large ribosomal subunit protein uL13 (142 aa).

This sequence belongs to the universal ribosomal protein uL13 family. As to quaternary structure, part of the 50S ribosomal subunit.

Its function is as follows. This protein is one of the early assembly proteins of the 50S ribosomal subunit, although it is not seen to bind rRNA by itself. It is important during the early stages of 50S assembly. The protein is Large ribosomal subunit protein uL13 of Ruthia magnifica subsp. Calyptogena magnifica.